The chain runs to 244 residues: 1-(5-phosphoribosyl)-5-[(5-phosphoribosylamino)methylideneamino] imidazole-4-carboxamide isomerase (244 aa).

Aspartate 8 (proton acceptor) is an active-site residue. Aspartate 129 functions as the Proton donor in the catalytic mechanism.

Belongs to the HisA/HisF family.

The protein localises to the cytoplasm. The catalysed reaction is 1-(5-phospho-beta-D-ribosyl)-5-[(5-phospho-beta-D-ribosylamino)methylideneamino]imidazole-4-carboxamide = 5-[(5-phospho-1-deoxy-D-ribulos-1-ylimino)methylamino]-1-(5-phospho-beta-D-ribosyl)imidazole-4-carboxamide. It participates in amino-acid biosynthesis; L-histidine biosynthesis; L-histidine from 5-phospho-alpha-D-ribose 1-diphosphate: step 4/9. The protein is 1-(5-phosphoribosyl)-5-[(5-phosphoribosylamino)methylideneamino] imidazole-4-carboxamide isomerase of Geobacter sulfurreducens (strain ATCC 51573 / DSM 12127 / PCA).